A 321-amino-acid polypeptide reads, in one-letter code: NADPH-dependent codeinone reductase 1-3 (321 aa).

Thr-27 and Asp-51 together coordinate NADPH. Catalysis depends on proton donor residues Tyr-56 and His-119. His-119 serves as a coordination point for substrate. NADPH-binding residues include Gln-187, Ser-214, Leu-216, Ser-264, and Arg-269. The disordered stretch occupies residues 300-321 (ADFLLSPTGPFKTEEEFWDEKD).

This sequence belongs to the aldo/keto reductase family. Latex secreting cells (laticifer cells). Expressed constitutively in all organs with highest levels in capsules. Restricted to the parietal region of sieve elements adjacent or proximal to laticifers in roots, stems, leaves and carpels.

It localises to the cytoplasm. The protein resides in the cytosol. The enzyme catalyses codeine + NADP(+) = codeinone + NADPH + H(+). The catalysed reaction is neopine + NADP(+) = neopinone + NADPH + H(+). It carries out the reaction morphine + NADP(+) = morphinone + NADPH + H(+). It catalyses the reaction neomorphine + NADP(+) = neomorphinone + NADPH + H(+). Its pathway is alkaloid biosynthesis; morphine biosynthesis. NADPH-dependent codeinone reductase involved in biosynthesis of morphinan-type benzylisoquinoline and opiate alkaloids natural products. Reduces codeinone to codeine in the penultimate step in morphine biosynthesis. Can use morphinone, hydrocodone and hydromorphone as substrate during reductive reaction with NADPH as cofactor, and morphine and dihydrocodeine as substrate during oxidative reaction with NADP as cofactor. Converts morphinone to morphine, and neomorphinone to neomorphine. Reduces irreversibly neopinone, a spontaneous isomer of codeinone, to neopine; in planta, neopine levels are limited to low levels. This chain is NADPH-dependent codeinone reductase 1-3, found in Papaver somniferum (Opium poppy).